Consider the following 859-residue polypeptide: Leucine--tRNA ligase (859 aa).

The 'HIGH' region motif lies at 42-52; sequence PYPSGRLHMGH. Residues 618–622 carry the 'KMSKS' region motif; it reads KMSKS. K621 serves as a coordination point for ATP.

The protein belongs to the class-I aminoacyl-tRNA synthetase family.

It is found in the cytoplasm. It catalyses the reaction tRNA(Leu) + L-leucine + ATP = L-leucyl-tRNA(Leu) + AMP + diphosphate. The polypeptide is Leucine--tRNA ligase (Shewanella sp. (strain MR-4)).